Here is a 226-residue protein sequence, read N- to C-terminus: ATP synthase subunit a (226 aa).

Helical transmembrane passes span 17–37, 79–99, 105–125, 134–154, 176–196, and 199–219; these read FSYF…AMMA, LVAT…LPGF, SLNL…FEGI, FAHF…IEIV, LFLM…AYVL, and FMAF…LAGA.

The protein belongs to the ATPase A chain family. F-type ATPases have 2 components, CF(1) - the catalytic core - and CF(0) - the membrane proton channel. CF(1) has five subunits: alpha(3), beta(3), gamma(1), delta(1), epsilon(1). CF(0) has three main subunits: a(1), b(2) and c(9-12). The alpha and beta chains form an alternating ring which encloses part of the gamma chain. CF(1) is attached to CF(0) by a central stalk formed by the gamma and epsilon chains, while a peripheral stalk is formed by the delta and b chains.

It is found in the cell inner membrane. Functionally, key component of the proton channel; it plays a direct role in the translocation of protons across the membrane. This Campylobacter jejuni subsp. doylei (strain ATCC BAA-1458 / RM4099 / 269.97) protein is ATP synthase subunit a.